Reading from the N-terminus, the 780-residue chain is Potassium/sodium hyperpolarization-activated cyclic nucleotide-gated channel 3 (780 aa).

Positions 1 to 47 (MEEEARPAVGDGEAATPARETPPAAPAQARAASGGVPESAPEPKRRQ) are disordered. The Cytoplasmic segment spans residues 1 to 96 (MEEEARPAVG…PYSDFRFYWD (96 aa)). The segment covering 13–32 (EAATPARETPPAAPAQARAA) has biased composition (low complexity). Residues 45–90 (RRQLGTLLQPTVNKFSLRVFGSHKAVEIEQERVKSAGAWIIHPYSD) are involved in subunit assembly. The helical transmembrane segment at 97-117 (LIMLLLMVGNLIVLPVGITFF) threads the bilayer. Residues 118 to 123 (KEENSP) are Extracellular-facing. The helical transmembrane segment at 124–144 (PWIVFNVLSDTFFLLDLVLNF) threads the bilayer. The Cytoplasmic portion of the chain corresponds to 145-170 (RTGIVVEEGAEILLAPRAIRTRYLRT). Residues 171–191 (WFLVDLISSIPVDYIFLVVEL) form a helical membrane-spanning segment. The Extracellular portion of the chain corresponds to 192-200 (EPRLDAEVY). The chain crosses the membrane as a helical; Voltage-sensor span at residues 201-221 (KTARALRIVRFTKILSLLRLL). Residues 222–252 (RLSRLIRYMHQWEEIFHMTYDLASAVVRIFN) lie on the Cytoplasmic side of the membrane. Residues 253 to 273 (LIGMMLLLCHWDGCLQFLVPM) traverse the membrane as a helical segment. Residues 274–296 (LQDFPSDCWVSMNRMVNHSWGRQ) are Extracellular-facing. A glycan (N-linked (GlcNAc...) asparagine) is linked at N290. Residues 297–318 (YSHALFKAMSHMLCIGYGQQAP) constitute an intramembrane region (pore-forming). Topologically, residues 319 to 328 (VGMPDVWLTM) are extracellular. A helical membrane pass occupies residues 329 to 349 (LSMIVGATCYAMFIGHATALI). The Cytoplasmic portion of the chain corresponds to 350–780 (QSLDSSRRQY…PRGPQISANM (431 aa)). Residues 353-780 (DSSRRQYQEK…PRGPQISANM (428 aa)) are interaction with KCTD3. Residues G491, E492, C494, R501, T502, R542, and R545 each coordinate 3',5'-cyclic AMP. Positions 549 to 569 (KNSILQRKRSEPSPGSSSGGV) are disordered. S634 bears the Phosphoserine mark. A compositionally biased stretch (polar residues) spans 687 to 698 (ASLSRTGRSQVS). The tract at residues 687–780 (ASLSRTGRSQ…PRGPQISANM (94 aa)) is disordered.

It belongs to the potassium channel HCN family. As to quaternary structure, homotetramer. The potassium channel is composed of a homo- or heterotetrameric complex of pore-forming subunits. Interacts with HCN1. Interacts with KCTD3; this interaction increases cell surface expression and current density of this channel. Interacts with PEX5L.

Its subcellular location is the cell membrane. The catalysed reaction is K(+)(in) = K(+)(out). It catalyses the reaction Na(+)(in) = Na(+)(out). Its activity is regulated as follows. Inhibited by Cs(1+) and ivabradine. Unlike HCN2 and HCN4, HCN3 is insensitive to cyclic nucleotides, such as cAMP or cGMP. This lack of sensitivity of HCN3, despite harboring a functional cyclic nucleotide-binding domain (CNBD), may be explained by its shorter C-terminal sequence, which may alter the normal autoinhibition of the channel. Phosphatidylinositol-4,5-bisphosphate (PIP(2)) shifts HCN3 activation to more depolarized potentials and accelerated activation kinetics. Its function is as follows. Hyperpolarization-activated ion channel that are permeable to sodium and potassium ions, with an about 3:1 preference for potassium ions. Contributes to the native pacemaker currents in heart (If) and in neurons (Ih). In particular, plays a pivotal role in maintaining excitability and promoting rhythmic burst firing within hypothalamic nuclei. Exerts a significant influence on the configuration of the cardiac action potential waveform. Does not appear to play a prominent role in the processing of acute, neuropathic, or inflammatory pain. This chain is Potassium/sodium hyperpolarization-activated cyclic nucleotide-gated channel 3 (Hcn3), found in Rattus norvegicus (Rat).